The sequence spans 143 residues: Transcriptional regulator MraZ (143 aa).

2 consecutive SpoVT-AbrB domains span residues 5–47 and 76–119; these read EYQH…PQEE and ASEC…SKSE.

The protein belongs to the MraZ family. As to quaternary structure, forms oligomers.

The protein localises to the cytoplasm. It localises to the nucleoid. The chain is Transcriptional regulator MraZ from Listeria welshimeri serovar 6b (strain ATCC 35897 / DSM 20650 / CCUG 15529 / CIP 8149 / NCTC 11857 / SLCC 5334 / V8).